Here is a 207-residue protein sequence, read N- to C-terminus: dITP/XTP pyrophosphatase (207 aa).

Substrate is bound at residue 7 to 12; sequence SNNAKK. Catalysis depends on Asp72, which acts as the Proton acceptor. Asp72 provides a ligand contact to Mg(2+). Residues Ser73, 155 to 158, Lys183, and 188 to 189 each bind substrate; these read FGYD and HR.

It belongs to the HAM1 NTPase family. As to quaternary structure, homodimer. It depends on Mg(2+) as a cofactor.

The enzyme catalyses XTP + H2O = XMP + diphosphate + H(+). It catalyses the reaction dITP + H2O = dIMP + diphosphate + H(+). It carries out the reaction ITP + H2O = IMP + diphosphate + H(+). Pyrophosphatase that catalyzes the hydrolysis of nucleoside triphosphates to their monophosphate derivatives, with a high preference for the non-canonical purine nucleotides XTP (xanthosine triphosphate), dITP (deoxyinosine triphosphate) and ITP. Seems to function as a house-cleaning enzyme that removes non-canonical purine nucleotides from the nucleotide pool, thus preventing their incorporation into DNA/RNA and avoiding chromosomal lesions. The polypeptide is dITP/XTP pyrophosphatase (Corynebacterium diphtheriae (strain ATCC 700971 / NCTC 13129 / Biotype gravis)).